We begin with the raw amino-acid sequence, 629 residues long: Phosphomethylpyrimidine synthase (629 aa).

The tract at residues 1-30 (MTTKLKNASNLSESAQVDQQSVQPFTRSQK) is disordered. Substrate is bound by residues Asn-233, Met-262, Tyr-291, His-327, 347–349 (SRG), 388–391 (DGLR), and Glu-427. His-431 lines the Zn(2+) pocket. Tyr-454 is a binding site for substrate. His-495 lines the Zn(2+) pocket. Positions 575, 578, and 583 each coordinate [4Fe-4S] cluster.

Belongs to the ThiC family. Homodimer. It depends on [4Fe-4S] cluster as a cofactor.

It catalyses the reaction 5-amino-1-(5-phospho-beta-D-ribosyl)imidazole + S-adenosyl-L-methionine = 4-amino-2-methyl-5-(phosphooxymethyl)pyrimidine + CO + 5'-deoxyadenosine + formate + L-methionine + 3 H(+). Its pathway is cofactor biosynthesis; thiamine diphosphate biosynthesis. Functionally, catalyzes the synthesis of the hydroxymethylpyrimidine phosphate (HMP-P) moiety of thiamine from aminoimidazole ribotide (AIR) in a radical S-adenosyl-L-methionine (SAM)-dependent reaction. This Pseudomonas fluorescens (strain ATCC BAA-477 / NRRL B-23932 / Pf-5) protein is Phosphomethylpyrimidine synthase.